We begin with the raw amino-acid sequence, 106 residues long: Starvation responsive small protein A (106 aa).

Residues 15-32 (ILLVNAGLISAYGVRIIF) form a helical membrane-spanning segment.

The protein localises to the cell membrane. Functionally, involved in starvation response and aggregation stage of the life cycle. May be involved in fruiting body morphogenesis and spore formation. The chain is Starvation responsive small protein A from Dictyostelium discoideum (Social amoeba).